The following is a 134-amino-acid chain: Postmeiotic segregation increased 2-like protein 5 (134 aa).

It belongs to the DNA mismatch repair MutL/HexB family.

This Homo sapiens (Human) protein is Postmeiotic segregation increased 2-like protein 5 (PMS2P5).